The primary structure comprises 121 residues: Small ribosomal subunit protein uS13 (121 aa).

Positions 92–121 (RKGLPVRGQRTKTNARTRKGPRKSGVQLKK) are disordered.

The protein belongs to the universal ribosomal protein uS13 family. Part of the 30S ribosomal subunit. Forms a loose heterodimer with protein S19. Forms two bridges to the 50S subunit in the 70S ribosome.

Functionally, located at the top of the head of the 30S subunit, it contacts several helices of the 16S rRNA. In the 70S ribosome it contacts the 23S rRNA (bridge B1a) and protein L5 of the 50S subunit (bridge B1b), connecting the 2 subunits; these bridges are implicated in subunit movement. Contacts the tRNAs in the A and P-sites. The polypeptide is Small ribosomal subunit protein uS13 (Polynucleobacter asymbioticus (strain DSM 18221 / CIP 109841 / QLW-P1DMWA-1) (Polynucleobacter necessarius subsp. asymbioticus)).